The sequence spans 274 residues: Copper chaperone for superoxide dismutase (274 aa).

The 64-residue stretch at 11–74 (VCALEFAVQM…LLESTGRQAV (64 aa)) folds into the HMA domain. 2 residues coordinate Cu cation: Cys22 and Cys25. A Glycyl lysine isopeptide (Lys-Gly) (interchain with G-Cter in ubiquitin) cross-link involves residue Lys76. The superoxide dismutase-like stretch occupies residues 88–234 (AAVAILEGCG…LACGIIARSA (147 aa)). Cys141 and Cys227 are joined by a disulfide. The Zn(2+) site is built by His147, His155, His164, and Asp167. Glycyl lysine isopeptide (Lys-Gly) (interchain with G-Cter in ubiquitin) cross-links involve residues Lys189, Lys216, and Lys241. 2 residues coordinate Cu cation: Cys244 and Cys246. Ser267 carries the post-translational modification Phosphoserine.

The protein in the C-terminal section; belongs to the Cu-Zn superoxide dismutase family. In terms of assembly, homodimer, and heterodimer with SOD1. Interacts with COMMD1. Interacts with XIAP/BIRC4. Interacts with SLC31A1(via C-terminal domain); this interaction is Cu(1+)-mediated. The heterodimer CCS:SOD1 interacts with SLC31A1; this heterotrimer is Cu(1+)-mediated and its maintenance is regulated through SOD1 activation. Requires Cu(2+) as cofactor. Zn(2+) is required as a cofactor. Ubiquitinion by XIAP/BIRC4 leads to enhancement of its chaperone activity toward its physiologic target, SOD1, rather than proteasomal degradation. XIAP/BIRC4 preferentially ubiquitinates at Lys-241. In terms of tissue distribution, ubiquitous.

It is found in the cytoplasm. Its function is as follows. Delivers copper to copper zinc superoxide dismutase (SOD1). This is Copper chaperone for superoxide dismutase from Mus musculus (Mouse).